The sequence spans 426 residues: Histidine--tRNA ligase (426 aa).

It belongs to the class-II aminoacyl-tRNA synthetase family. Homodimer.

The protein resides in the cytoplasm. It carries out the reaction tRNA(His) + L-histidine + ATP = L-histidyl-tRNA(His) + AMP + diphosphate + H(+). This Pseudoalteromonas translucida (strain TAC 125) protein is Histidine--tRNA ligase.